We begin with the raw amino-acid sequence, 1961 residues long: Myosin-9 (1961 aa).

Alanine 2 carries the N-acetylalanine modification. A mediates interaction with LIMCH1 region spans residues 2–838; sequence AQQAADKYLY…RLFTKVKPLL (837 aa). Lysine 8 carries the post-translational modification N6-acetyllysine. At tyrosine 11 the chain carries Phosphotyrosine. One can recognise a Myosin N-terminal SH3-like domain in the interval 27 to 77; it reads GAKKLVWVPSTKNGFEPASLKEEVGEEAIVELVENGKKVKVNKDDIQKMNP. The Myosin motor domain maps to 81 to 776; it reads SKVEDMAELT…VLAHLEEERD (696 aa). Lysine 102 bears the N6-acetyllysine mark. 174–181 contributes to the ATP binding site; sequence GESGAGKT. N6-acetyllysine occurs at positions 299, 435, and 613. Serine 628 carries the post-translational modification Phosphoserine. An actin-binding region spans residues 654-676; it reads LAKLMATLRNTNPNFVCCIIPNH. At tyrosine 754 the chain carries Phosphotyrosine. The 30-residue stretch at 779–808 folds into the IQ domain; the sequence is ITDVIIGFQACCRGYLARKAFAKRQQQLTA. Residues 841–1927 adopt a coiled-coil conformation; the sequence is IRHEDELLAK…LKNKLRRGDM (1087 aa). Lysine 850 is subject to N6-succinyllysine. N6-acetyllysine is present on residues lysine 860, lysine 975, and lysine 1024. The segment covering 1035-1055 has biased composition (basic and acidic residues); that stretch reads RLRREEKQRQELEKTRRKLEG. The interval 1035-1057 is disordered; that stretch reads RLRREEKQRQELEKTRRKLEGDS. The residue at position 1114 (serine 1114) is a Phosphoserine. N6-acetyllysine is present on residues lysine 1234 and lysine 1249. Residues 1331–1353 form a disordered region; it reads LKQMEDEKNSFREQLEEEEEEAK. A compositionally biased stretch (basic and acidic residues) spans 1332–1344; it reads KQMEDEKNSFREQ. N6-acetyllysine is present on residues lysine 1358, lysine 1393, lysine 1405, lysine 1411, lysine 1460, and lysine 1639. The residue at position 1670 (lysine 1670) is an N6-succinyllysine. Serine 1715 bears the Phosphoserine mark. Residues lysine 1794, lysine 1803, and lysine 1846 each carry the N6-acetyllysine modification. Residues 1878 to 1910 form a disordered region; it reads RQLEEAEEEAQRANASRRKLQRELEDATETADA. Residue arginine 1924 is modified to Omega-N-methylarginine. Positions 1938–1961 are disordered; sequence KGTGDCSDEEVDGKADGADAKATE. Serine 1944 carries the phosphoserine modification. Residues 1949–1961 show a composition bias toward basic and acidic residues; that stretch reads DGKADGADAKATE.

This sequence belongs to the TRAFAC class myosin-kinesin ATPase superfamily. Myosin family. In terms of assembly, myosin is a hexameric protein that consists of 2 heavy chain subunits (MHC), 2 alkali light chain subunits (MLC) and 2 regulatory light chain subunits (MLC-2). Interacts with RASIP1. Interacts with DDR1. Interacts with PDLIM2. Interacts with SVIL. Interacts with HTRA3. Interacts with Myo7a. Interacts with CFAP95. Interacts with LIMCH1; independently of the integration of MYH9 into the myosin complex. Interacts with RAB3A. Interacts with ZBED4. Interacts with S100A4; this interaction increases cell motility. ISGylated. In terms of processing, ubiquitination.

Its subcellular location is the cytoplasm. The protein localises to the cytoskeleton. It localises to the cell cortex. It is found in the cytoplasmic vesicle. The protein resides in the secretory vesicle. Its subcellular location is the cortical granule. Its function is as follows. Cellular myosin that appears to play a role in cytokinesis, cell shape, and specialized functions such as secretion and capping. Required for cortical actin clearance prior to oocyte exocytosis. Promotes cell motility in conjunction with S100A4. During cell spreading, plays an important role in cytoskeleton reorganization, focal contact formation (in the margins but not the central part of spreading cells), and lamellipodial retraction; this function is mechanically antagonized by MYH10. The sequence is that of Myosin-9 (Myh9) from Rattus norvegicus (Rat).